Consider the following 473-residue polypeptide: Ribosomal RNA small subunit methyltransferase F (473 aa).

Residues 123–129 (AAAPGSK), Glu-147, Asp-174, and Asp-192 contribute to the S-adenosyl-L-methionine site. Cys-245 (nucleophile) is an active-site residue.

Belongs to the class I-like SAM-binding methyltransferase superfamily. RsmB/NOP family.

Its subcellular location is the cytoplasm. The enzyme catalyses cytidine(1407) in 16S rRNA + S-adenosyl-L-methionine = 5-methylcytidine(1407) in 16S rRNA + S-adenosyl-L-homocysteine + H(+). Its function is as follows. Specifically methylates the cytosine at position 1407 (m5C1407) of 16S rRNA. This chain is Ribosomal RNA small subunit methyltransferase F, found in Vibrio atlanticus (strain LGP32) (Vibrio splendidus (strain Mel32)).